Here is a 915-residue protein sequence, read N- to C-terminus: MSGQTLTDRIAAAQYSVTGSAVARAVCKATTHEVMGPKKKHLDYLIQATNETNVNIPQMADTLFERATNSSWVVVFKALVTTHHLMVHGNERFIQYLASRNTLFNLSNFLDKSGSHGYDMSTFIRRYSRYLNEKAFSYRQMAFDFARVKKGADGVMRTMVPEKLLKSMPILQGQIDALLEFDVHPNELTNGVINAAFMLLFKDLIKLFACYNDGVINLLEKFFEMKKGQCKDALEIYKRFLTRMTRVSEFLKVADEVGIDKGDIPDLTQAPSSLMETLEQHLNTLEGKKPGNNEGSGAPSPLSKSSPATTVTSPNSTPAKTIDTSPPVDIFATASAAAPVSSAKPSSDLLDLQPDFSGARAGAAAPVPPPTGGATAWGDLLGEDSLAALSSVPSEAPISDPFAPEPSPPTTTTEPASASASATTAVTAATTEVDLFGDAFAASPGEAPAASEGATAPATPAPVAAALDACSGNDPFAPSEGSAEAAPELDLFAMKPPETSAPVVTPTASTAPPVPATAPSPAPTAVAATAATTTAAAAATTTATTSAAAATTAAAPPALDIFGDLFDSAPEVAAASKPDVAPSIDLFGTDAFSSPPRGASPVPESSLTADLLSGSGFHCAEDDRHVPLFFTAVDAFAAPSPASTASPAKAESSGVIDLFGDAFGSSASETQPAPQAVSSSSASADLLAGFGGSFMAPSTTPVTPAQNNLLQPNFEAAFGTTPSTSSSSSFDPSGDLLMPTMAPSGQPAPVSMVPPSPAMSASKGLGSDLDSSLASLVGNLGISGTTSKKGDLQWNAGEKKLTGGANWQPKVTPATWSAGVPPQGTVPPTSSVPPGAGAPSVGQPGAGYGMPPAGTGMTMMPQQPVMFAQPMMRPPFGAAAVPGTQLSPSPTPATQSPKKPPAKDPLADLNIKDFL.

Positions 14 to 145 (QYSVTGSAVA…FSYRQMAFDF (132 aa)) constitute an ENTH domain. Disordered regions lie at residues 285–326 (LEGK…DTSP), 391–425 (SVPS…ATTA), and 497–522 (PETS…PSPA). 3 positions are modified to phosphoserine: S296, S300, and S306. Positions 302–324 (LSKSSPATTVTSPNSTPAKTIDT) are enriched in polar residues. T310 is a glycosylation site (O-linked (GlcNAc) threonine). Residue S313 is modified to Phosphoserine. Phosphothreonine is present on T317. 2 stretches are compositionally biased toward low complexity: residues 410 to 425 (TTTT…ATTA) and 500 to 511 (SAPVVTPTASTA). Residues 512–522 (PPVPATAPSPA) are compositionally biased toward pro residues. Phosphoserine occurs at positions 594, 600, 627, 640, and 646. Low complexity predominate over residues 720–735 (TTPSTSSSSSFDPSGD). The segment at 720-765 (TTPSTSSSSSFDPSGDLLMPTMAPSGQPAPVSMVPPSPAMSASKGL) is disordered. Phosphoserine is present on S775. The tract at residues 817-855 (SAGVPPQGTVPPTSSVPPGAGAPSVGQPGAGYGMPPAGT) is disordered. Position 873 is an asymmetric dimethylarginine; alternate (R873). R873 is subject to Omega-N-methylarginine; alternate. The interval 875 to 915 (PFGAAAVPGTQLSPSPTPATQSPKKPPAKDPLADLNIKDFL) is disordered. Positions 884-896 (TQLSPSPTPATQS) are enriched in polar residues. Positions 901–915 (PAKDPLADLNIKDFL) are enriched in basic and acidic residues.

Belongs to the PICALM/SNAP91 family. As to quaternary structure, binds AP2A2. Interacts with AP2B1; clathrin competes with SNAP91. In terms of processing, thr-310 can be modified by the addition of N-acetylglucosamine which can be further phosphorylated. The form with phosphorylated O-linked N-acetylglucosamine is predominant in brain synaptosomes. There is no evidence for direct Thr-310 phosphorylation.

The protein resides in the cell membrane. It localises to the membrane. The protein localises to the coated pit. Its function is as follows. Adaptins are components of the adapter complexes which link clathrin to receptors in coated vesicles. Clathrin-associated protein complexes are believed to interact with the cytoplasmic tails of membrane proteins, leading to their selection and concentration. Binding of AP180 to clathrin triskelia induces their assembly into 60-70 nm coats. This chain is Clathrin coat assembly protein AP180 (Snap91), found in Rattus norvegicus (Rat).